Consider the following 400-residue polypeptide: Dual specificity mitogen-activated protein kinase kinase 2 (400 aa).

The residue at position 1 (methionine 1) is an N-acetylmethionine. The residue at position 23 (serine 23) is a Phosphoserine. The Protein kinase domain maps to 72 to 369; sequence FERISELGAG…LKMLTNHTFI (298 aa). Residues 78-86 and lysine 101 contribute to the ATP site; that span reads LGAGNGGVV. Aspartate 194 serves as the catalytic Proton acceptor. (Microbial infection) O-acetylserine; by Yersinia YopJ; alternate occurs at positions 222 and 226. Phosphoserine; by RAF; alternate is present on serine 222. A Phosphoserine; alternate modification is found at serine 226. The tract at residues 286–310 is disordered; sequence GEEGEPHSISPRPRPPGRPVSGHGM. Phosphoserine occurs at positions 293, 295, and 306. Phosphothreonine is present on residues threonine 394 and threonine 396.

Belongs to the protein kinase superfamily. STE Ser/Thr protein kinase family. MAP kinase kinase subfamily. In terms of assembly, interacts with MORG1. Interacts with SGK1. Interacts with KSR1. Interacts with KSR1 and BRAF; the interaction with KSR1 mediates KSR1-BRAF dimerization. Interacts with GLS. The cofactor is Mg(2+). MAPKK is itself dependent on Ser/Thr phosphorylation for activity catalyzed by MAP kinase kinase kinases (RAF or MEKK1). Phosphorylated by MAP2K1/MEK1. In terms of processing, (Microbial infection) Acetylation of Ser-222 and Ser-226 by Yersinia YopJ prevents phosphorylation and activation, thus blocking the MAPK signaling pathway.

It localises to the cytoplasm. It is found in the membrane. It carries out the reaction L-seryl-[protein] + ATP = O-phospho-L-seryl-[protein] + ADP + H(+). The catalysed reaction is L-threonyl-[protein] + ATP = O-phospho-L-threonyl-[protein] + ADP + H(+). It catalyses the reaction L-tyrosyl-[protein] + ATP = O-phospho-L-tyrosyl-[protein] + ADP + H(+). In terms of biological role, catalyzes the concomitant phosphorylation of a threonine and a tyrosine residue in a Thr-Glu-Tyr sequence located in MAP kinases. Activates the ERK1 and ERK2 MAP kinases. Activates BRAF in a KSR1 or KSR2-dependent manner; by binding to KSR1 or KSR2 releases the inhibitory intramolecular interaction between KSR1 or KSR2 protein kinase and N-terminal domains which promotes KSR1 or KSR2-BRAF dimerization and BRAF activation. This chain is Dual specificity mitogen-activated protein kinase kinase 2 (MAP2K2), found in Homo sapiens (Human).